We begin with the raw amino-acid sequence, 485 residues long: MSELSQLSPQPLWDIFAKICSIPHPSYHEEQLAEYIVGWAKEKGFHVERDQVGNILIRKPATAGMENRKPVVLQAHLDMVPQKNNDTVHDFTKDPIQPYIDGEWVKARGTTLGADNGIGMASALAVLADENVVHGPLEVLLTMTEEAGMDGAFGLQGNWLQADILINTDSEEEGEIYMGCAGGIDFTSNLHLDREAVPAGFETFKLTLKGLKGGHSGGEIHVGLGNANKLLVRFLAGHAEELDLRLIDFNGGTLRNAIPREAFATIAVAADKVDVLKSLVNTYQEILKNELAEKEKNLALLLDSVANDKAALIAKSRDTFIRLLNATPNGVIRNSDVAKGVVETSLNVGVVTMTDNNVEIHCLIRSLIDSGKDYVVSMLDSLGKLAGAKTEAKGAYPGWQPDANSPVMHLVRETYQRLFNKTPNIQIIHAGLECGLFKKPYPEMDMVSIGPTITGPHSPDEQVHIESVGHYWTLLTELLKEIPAK.

Zn(2+) is bound at residue His-76. Asp-78 is a catalytic residue. Asp-115 provides a ligand contact to Zn(2+). Glu-145 functions as the Proton acceptor in the catalytic mechanism. Residues Glu-146 and Asp-169 each coordinate Zn(2+). Lys-296 is subject to N6-acetyllysine. His-457 contributes to the Zn(2+) binding site.

Belongs to the peptidase M20C family. Zn(2+) is required as a cofactor. Co(2+) serves as cofactor.

It catalyses the reaction Hydrolysis of dipeptides, preferentially hydrophobic dipeptides including prolyl amino acids.. Its activity is regulated as follows. Inhibited by metal chelators. Dipeptidase with broad substrate specificity. Requires dipeptide substrates with an unblocked N-terminus and the amino group in the alpha or beta position. Non-protein amino acids and proline are not accepted in the C-terminal position, whereas some dipeptide amides and formyl amino acids are hydrolyzed. Also shows cysteinylglycinase activity, which is sufficient for E.coli to utilize cysteinylglycine as a cysteine source. The polypeptide is Cytosol non-specific dipeptidase (pepD) (Escherichia coli (strain K12)).